Reading from the N-terminus, the 287-residue chain is Ribosomal RNA small subunit methyltransferase A (287 aa).

The span at 1–15 shows a compositional bias: polar residues; that stretch reads MSKTTFDAQSITNSL. A disordered region spans residues 1 to 20; sequence MSKTTFDAQSITNSLRAAKH. Residues N29, L31, G56, E77, and N126 each coordinate S-adenosyl-L-methionine.

The protein belongs to the class I-like SAM-binding methyltransferase superfamily. rRNA adenine N(6)-methyltransferase family. RsmA subfamily.

The protein localises to the cytoplasm. It catalyses the reaction adenosine(1518)/adenosine(1519) in 16S rRNA + 4 S-adenosyl-L-methionine = N(6)-dimethyladenosine(1518)/N(6)-dimethyladenosine(1519) in 16S rRNA + 4 S-adenosyl-L-homocysteine + 4 H(+). Specifically dimethylates two adjacent adenosines (A1518 and A1519) in the loop of a conserved hairpin near the 3'-end of 16S rRNA in the 30S particle. May play a critical role in biogenesis of 30S subunits. The protein is Ribosomal RNA small subunit methyltransferase A of Psychrobacter cryohalolentis (strain ATCC BAA-1226 / DSM 17306 / VKM B-2378 / K5).